Consider the following 364-residue polypeptide: Selenide, water dikinase (364 aa).

Residue Sec-25 is part of the active site. Residue Sec-25 is a non-standard amino acid, selenocysteine. ATP contacts are provided by residues Lys-28, 46–48 (GYD), Asp-66, Asp-89, and 141–143 (GQT). Asp-48 serves as a coordination point for Mg(2+). Asp-89 lines the Mg(2+) pocket. A Mg(2+)-binding site is contributed by Asp-244.

This sequence belongs to the selenophosphate synthase 1 family. Class II subfamily. As to quaternary structure, homodimer. Requires Mg(2+) as cofactor.

The enzyme catalyses hydrogenselenide + ATP + H2O = selenophosphate + AMP + phosphate + 2 H(+). Functionally, synthesizes selenophosphate from selenide and ATP. This Dictyostelium discoideum (Social amoeba) protein is Selenide, water dikinase (selD).